A 372-amino-acid chain; its full sequence is 4-hydroxy-3-methylbut-2-en-1-yl diphosphate synthase (flavodoxin) (372 aa).

4 residues coordinate [4Fe-4S] cluster: Cys-270, Cys-273, Cys-305, and Glu-312.

It belongs to the IspG family. It depends on [4Fe-4S] cluster as a cofactor.

It carries out the reaction (2E)-4-hydroxy-3-methylbut-2-enyl diphosphate + oxidized [flavodoxin] + H2O + 2 H(+) = 2-C-methyl-D-erythritol 2,4-cyclic diphosphate + reduced [flavodoxin]. Its pathway is isoprenoid biosynthesis; isopentenyl diphosphate biosynthesis via DXP pathway; isopentenyl diphosphate from 1-deoxy-D-xylulose 5-phosphate: step 5/6. Its function is as follows. Converts 2C-methyl-D-erythritol 2,4-cyclodiphosphate (ME-2,4cPP) into 1-hydroxy-2-methyl-2-(E)-butenyl 4-diphosphate. This is 4-hydroxy-3-methylbut-2-en-1-yl diphosphate synthase (flavodoxin) from Shewanella amazonensis (strain ATCC BAA-1098 / SB2B).